A 149-amino-acid chain; its full sequence is METKSDYEDAVFYFVDDDEICSRDSIIDLIDEYITWRNHVIVFNKDITSCGRLYKELIKFDDVAIRYYGIDKINEIVEAMSEGDHYINLTEVHDQESLFATIGICAKITEHWGYKKISESKFQSLGNITDLMTDDNINILILFLEKKMN.

Belongs to the orthopoxvirus OPG044 family. Interacts with DDX3; this interaction inhibits DDX3 and suppresses DDX3-mediated IFN-beta promoter induction. Interacts with TRAF6 and IRAK2; these interactions suppress TLR-dependent NF-KappaB activation.

The protein resides in the host cytoplasm. Its function is as follows. Virulence factor that affects the acute immune response to infection. Bcl-2-like protein which, through its interaction with the DEAD box RNA helicase DDX3X/DDX3, prevents TBK1/IKKepsilon-mediated IRF3 activation. Contributes to virulence by binding to the host TRAF6 and IRAK2 and preventing host NF-kappa-B activation. The protein is Protein K7 (OPG044) of Cynomys gunnisoni (Gunnison's prairie dog).